The chain runs to 89 residues: UPF0223 protein BCA_4066 (89 aa).

The protein belongs to the UPF0223 family.

The polypeptide is UPF0223 protein BCA_4066 (Bacillus cereus (strain 03BB102)).